The chain runs to 445 residues: UPF0761 membrane protein Mlg_0521 (445 aa).

A run of 6 helical transmembrane segments spans residues 56–76, 112–132, 152–172, 195–215, 225–245, and 259–279; these read LLALVPLLTIGLSIFAAFPVF, GLTVVGLLALMVSALLMMAAI, FMVYWTVLTLAPILMGASLGI, LLAGMPFVAETVAFTFLYAAV, ALLGGLLAAALFEAAKGGFGW, and ALAALPIFLIWLYLSWVVVLV.

It belongs to the UPF0761 family.

It is found in the cell inner membrane. This is UPF0761 membrane protein Mlg_0521 from Alkalilimnicola ehrlichii (strain ATCC BAA-1101 / DSM 17681 / MLHE-1).